The primary structure comprises 421 residues: D-aspartate ligase (421 aa).

In terms of domain architecture, ATP-grasp spans 130–332 (YEVCEEYDLP…LARFVTEDRV (203 aa)). An ATP-binding site is contributed by 161–224 (PFEFPVALKP…QDFIPGDDSN (64 aa)). Mg(2+) is bound by residues aspartate 290, glutamate 304, and asparagine 306.

Mg(2+) is required as a cofactor.

The enzyme catalyses [beta-GlcNAc-(1-&gt;4)-Mur2Ac(oyl-L-Ala-gamma-D-Glu-L-Lys-D-Ala-D-Ala)](n) + n D-aspartate + n ATP = [beta-GlcNAc-(1-&gt;4)-Mur2Ac(oyl-L-Ala-gamma-D-Glu-6-N-(beta-D-Asp)-L-Lys-D-Ala-D-Ala)]n + n ADP + n phosphate + n H(+). The protein operates within cell wall biogenesis; peptidoglycan biosynthesis. In terms of biological role, catalyzes the addition of D-aspartate onto the lysine residue in the peptidoglycan precursor UDP-MurNAc-pentapeptide. The ligation occurs between the beta-carboxylate of D-Asp and the epsilon-amino group of L-Lys. Is highly specific for D-aspartate, as L-aspartate, D-glutamate, D-alanine, D-iso-asparagine and D-malate are not substrates. The chain is D-aspartate ligase from Enterococcus faecium (strain Aus0004).